The following is a 390-amino-acid chain: Fluoride export protein 1 (390 aa).

Residues 1-22 are disordered; it reads MVAPLVSESQSSSIEETDEQQQ. Topologically, residues 1 to 72 are cytoplasmic; the sequence is MVAPLVSESQ…RFLDKTQKYY (72 aa). The chain crosses the membrane as a helical span at residues 73–93; that stretch reads PVILNIVHGAIWGVLVRKGLM. The Extracellular portion of the chain corresponds to 94 to 100; the sequence is SLTTYSG. Residues 101–121 form a helical membrane-spanning segment; the sequence is SFLSGVIWANFAACVVMGLAI. Topologically, residues 122 to 143 are cytoplasmic; sequence DGEVFWIRLLEEKDYPNKGAIP. Residues 144-164 traverse the membrane as a helical segment; sequence VYTGLTTGFCGTVSSFSSVIL. Residues 165-185 are Extracellular-facing; the sequence is EAFNKAADTDIGVRHHYPNGA. The chain crosses the membrane as a helical span at residues 186–206; that stretch reads YGIMQFLAVILAQFGLSIMGF. Residues 207 to 229 lie on the Cytoplasmic side of the membrane; that stretch reads HMGKQFSAVVDNYLPLVTKRIYK. A helical transmembrane segment spans residues 230 to 250; the sequence is VLELTSMILGVVLVVITCILI. Residues 251–256 are Extracellular-facing; sequence GVKKQG. The helical transmembrane segment at 257–279 threads the bilayer; that stretch reads SWRSWTFSMLFAPFGALLRYYLS. Residues 280–290 lie on the Cytoplasmic side of the membrane; sequence KFLNNKVSNFP. Residues 291 to 311 form a helical membrane-spanning segment; the sequence is LGTFTANFLGTLLLAVFTLLA. Residues 312–338 lie on the Extracellular side of the membrane; sequence RGKLPGGKGHIVTNTIALHVLEGLDDG. Residues 339-359 form a helical membrane-spanning segment; the sequence is FCGGLTTVSTFVVELFGLKTL. Residues 360–368 are Cytoplasmic-facing; that stretch reads FSYRYGTIS. A helical transmembrane segment spans residues 369–389; the sequence is ILVCFAGVVLILGSYNWSVGL. A topological domain (extracellular) is located at residue aspartate 390.

Belongs to the fluoride channel Fluc/FEX (TC 1.A.43) family.

The protein localises to the cell membrane. It carries out the reaction fluoride(in) = fluoride(out). Its function is as follows. Fluoride channel required for the rapid expulsion of cytoplasmic fluoride. The sequence is that of Fluoride export protein 1 from Candida albicans (strain SC5314 / ATCC MYA-2876) (Yeast).